Reading from the N-terminus, the 84-residue chain is Cysteine-rich protamine (84 aa).

2 disulfide bridges follow: C16-C24 and C64-C80.

In terms of assembly, cross-linked by interchain disulfide bonds around the DNA-helix. As to expression, testis.

It localises to the nucleus. The protein resides in the chromosome. In terms of biological role, protamines substitute for histones in the chromatin of sperm during the haploid phase of spermatogenesis. They compact sperm DNA into a highly condensed, stable and inactive complex. This protamine condenses spermiogenic chromatin in a pattern which comprises fibers with a progressively larger diameter and lamellae that finally undergo definitive coalescence. This is Cysteine-rich protamine from Eledone cirrhosa (Curled octopus).